Consider the following 873-residue polypeptide: Rho GTPase-activating protein gacJJ (873 aa).

The segment at 64 to 147 (DEPSSINTSS…NVNNSSNAPT (84 aa)) is disordered. Residues 66 to 91 (PSSINTSSGNIGSNNNSSSNTPLTGS) are compositionally biased toward low complexity. The span at 103-112 (IGGGGGGGDN) shows a compositional bias: gly residues. Low complexity predominate over residues 113-144 (GITNSGNIGSSSNSDLKKSTSSGIVNVNNSSN). The PH domain maps to 301-402 (NPVREGYLKK…WTVLPIVIES (102 aa)). The 194-residue stretch at 428 to 621 (VPIEKTVSGN…SLIRDYQYIF (194 aa)) folds into the Rho-GAP domain. An SH3 domain is found at 628-694 (EQKILAKSLY…PASYVELLPH (67 aa)). Positions 715–761 (MLEMESTKTKNQEIDKNIKQLEITKKELESTINDLENEKAALENDPT) form a coiled coil.

The protein localises to the cytoplasm. In terms of biological role, rho GTPase-activating protein involved in the signal transduction pathway. The sequence is that of Rho GTPase-activating protein gacJJ (gacJJ) from Dictyostelium discoideum (Social amoeba).